Consider the following 438-residue polypeptide: 23S rRNA (uracil(1939)-C(5))-methyltransferase RlmD (438 aa).

A TRAM domain is found at 4–68 (FYTPGRRTAT…RHFARGRVTR (65 aa)). Residues Cys-81, Cys-87, Cys-90, and Cys-167 each coordinate [4Fe-4S] cluster. Gln-269, Phe-298, Asn-303, Glu-319, Asn-346, and Asp-367 together coordinate S-adenosyl-L-methionine. Cys-393 functions as the Nucleophile in the catalytic mechanism.

This sequence belongs to the class I-like SAM-binding methyltransferase superfamily. RNA M5U methyltransferase family. RlmD subfamily.

It catalyses the reaction uridine(1939) in 23S rRNA + S-adenosyl-L-methionine = 5-methyluridine(1939) in 23S rRNA + S-adenosyl-L-homocysteine + H(+). Its function is as follows. Catalyzes the formation of 5-methyl-uridine at position 1939 (m5U1939) in 23S rRNA. This is 23S rRNA (uracil(1939)-C(5))-methyltransferase RlmD from Edwardsiella ictaluri (strain 93-146).